We begin with the raw amino-acid sequence, 104 residues long: Protein S100-A14 (104 aa).

The EF-hand domain maps to 27-61 (KNFHQYSVEGGKETLTPSELRDLVTQQLPHLMPSN).

It belongs to the S-100 family. As to quaternary structure, homodimer. Interacts with AGER.

It is found in the cytoplasm. Its function is as follows. Modulates P53/TP53 protein levels, and thereby plays a role in the regulation of cell survival and apoptosis. Depending on the context, it can promote cell proliferation or apoptosis. Plays a role in the regulation of cell migration by modulating the levels of MMP2, a matrix protease that is under transcriptional control of P53/TP53. Does not bind calcium. In Bos taurus (Bovine), this protein is Protein S100-A14 (S100A14).